The following is a 387-amino-acid chain: Galactokinase (387 aa).

Substrate is bound at residue 33–36; it reads EHTD. Residues Ser-67 and 123–129 each bind ATP; that span reads GAGLSSS. The Mg(2+) site is built by Ser-129 and Glu-161. Asp-173 (proton acceptor) is an active-site residue. Residue Tyr-223 participates in substrate binding.

It belongs to the GHMP kinase family. GalK subfamily.

Its subcellular location is the cytoplasm. The catalysed reaction is alpha-D-galactose + ATP = alpha-D-galactose 1-phosphate + ADP + H(+). It participates in carbohydrate metabolism; galactose metabolism. In terms of biological role, catalyzes the transfer of the gamma-phosphate of ATP to D-galactose to form alpha-D-galactose-1-phosphate (Gal-1-P). The chain is Galactokinase from Lacticaseibacillus casei (Lactobacillus casei).